We begin with the raw amino-acid sequence, 540 residues long: NADH-quinone oxidoreductase subunit N 1 (540 aa).

The next 13 helical transmembrane spans lie at 11–31, 52–72, 109–129, 142–162, 195–215, 250–270, 284–306, 324–344, 352–372, 386–406, 431–451, 464–486, and 508–528; these read ILPE…DVLT, AVGL…LFTV, FTMI…LLAM, ALLI…EFIL, FLFG…TYGF, LILG…VVPF, PVTA…RLLT, WTSI…LAAL, LLAY…LLWA, LIYY…VLAV, LMMT…GFWA, AVPL…LRFL, and AAII…NLIW.

This sequence belongs to the complex I subunit 2 family. In terms of assembly, NDH-1 is composed of 14 different subunits. Subunits NuoA, H, J, K, L, M, N constitute the membrane sector of the complex.

The protein resides in the cell membrane. It catalyses the reaction a quinone + NADH + 5 H(+)(in) = a quinol + NAD(+) + 4 H(+)(out). NDH-1 shuttles electrons from NADH, via FMN and iron-sulfur (Fe-S) centers, to quinones in the respiratory chain. The immediate electron acceptor for the enzyme in this species is believed to be ubiquinone. Couples the redox reaction to proton translocation (for every two electrons transferred, four hydrogen ions are translocated across the cytoplasmic membrane), and thus conserves the redox energy in a proton gradient. The polypeptide is NADH-quinone oxidoreductase subunit N 1 (Roseiflexus castenholzii (strain DSM 13941 / HLO8)).